The primary structure comprises 23 residues: Coenzyme PQQ synthesis protein A (23 aa).

Residues 15-19 constitute a cross-link (pyrroloquinoline quinone (Glu-Tyr)); sequence EVTLY.

It belongs to the PqqA family.

The protein operates within cofactor biosynthesis; pyrroloquinoline quinone biosynthesis. Functionally, required for coenzyme pyrroloquinoline quinone (PQQ) biosynthesis. PQQ is probably formed by cross-linking a specific glutamate to a specific tyrosine residue and excising these residues from the peptide. This chain is Coenzyme PQQ synthesis protein A, found in Pseudomonas aeruginosa (strain UCBPP-PA14).